The primary structure comprises 115 residues: U3-lycotoxin-Ls1f (115 aa).

An N-terminal signal peptide occupies residues Met-1 to Ala-20. Positions Glu-21–Arg-44 are excised as a propeptide. 4 cysteine pairs are disulfide-bonded: Cys-48/Cys-63, Cys-55/Cys-72, Cys-62/Cys-87, and Cys-74/Cys-85.

The protein belongs to the neurotoxin 19 (CSTX) family. 01 subfamily. Expressed by the venom gland.

It is found in the secreted. This is U3-lycotoxin-Ls1f from Lycosa singoriensis (Wolf spider).